A 304-amino-acid chain; its full sequence is CBY1-interacting BAR domain-containing protein 2 (304 aa).

The segment at 6 to 217 is BAR-like; sequence SRDSQVRVME…EKYDLERDLL (212 aa).

Belongs to the CIBAR family. In terms of assembly, homodimer (via BAR-like domain). Heterodimer (via BAR-like domain) with FAM92A. Interacts with CBY1. In terms of tissue distribution, restricted to certain tissues, most prominently expressed in multicilaited tissues.

The protein resides in the cytoplasm. It localises to the cytoskeleton. It is found in the microtubule organizing center. Its subcellular location is the centrosome. The protein localises to the centriole. The protein resides in the cilium basal body. Its function is as follows. May play a role in ciliogenesis. In cooperation with CBY1 may facilitate ciliogenesis likely by the recruitment and fusion of endosomal vesicles at distal appendages during early stages of ciliogenesis. This is CBY1-interacting BAR domain-containing protein 2 from Homo sapiens (Human).